The sequence spans 263 residues: MPSVFLLFDIGNTNVKIGIADHDGVVASYVLPTDTHQTGDSLGLRLADVVRHAGFAPGDVTACVASSVVPSFNPLMRQACGRYFDRRLLLAPEDIAIPLENRYERPQEVGADRLVAAFAARRLWPAPRSIVSVDYGTATTFDCVQGEAYLGGLICPGVHSAAGALAAGTARLPRISLDVREDLPVVGRSTSMSLNHGFVFGFASMTEGLCHRLSAVLEAPMQVVATGGFASAIARVSNCFDHVRPDLLLEGLRILYMESGIKG.

9–16 (DIGNTNVK) is an ATP binding site. Residues Y103 and 110–113 (GADR) contribute to the substrate site. The Proton acceptor role is filled by D112. D134 contacts K(+). An ATP-binding site is contributed by T137. T190 is a substrate binding site.

It belongs to the type III pantothenate kinase family. Homodimer. Requires NH4(+) as cofactor. K(+) is required as a cofactor.

The protein localises to the cytoplasm. The enzyme catalyses (R)-pantothenate + ATP = (R)-4'-phosphopantothenate + ADP + H(+). It functions in the pathway cofactor biosynthesis; coenzyme A biosynthesis; CoA from (R)-pantothenate: step 1/5. Functionally, catalyzes the phosphorylation of pantothenate (Pan), the first step in CoA biosynthesis. This is Type III pantothenate kinase from Oleidesulfovibrio alaskensis (strain ATCC BAA-1058 / DSM 17464 / G20) (Desulfovibrio alaskensis).